Consider the following 355-residue polypeptide: Protein RecA (355 aa).

67–74 (GPESSGKT) lines the ATP pocket.

It belongs to the RecA family.

It localises to the cytoplasm. Functionally, can catalyze the hydrolysis of ATP in the presence of single-stranded DNA, the ATP-dependent uptake of single-stranded DNA by duplex DNA, and the ATP-dependent hybridization of homologous single-stranded DNAs. It interacts with LexA causing its activation and leading to its autocatalytic cleavage. The chain is Protein RecA from Shewanella baltica (strain OS195).